The primary structure comprises 723 residues: MDIISTTFDQINTHIKFTNQKKIEFQNHIEKEWEIITQLESNEQFTVYMSKKLKGPNFTNNRFGLCTVKKIKSQYFNENEILNHIKLRDNKYVLKYYGCGKDNNQDVYIYLEFIEYSIPISKVKLIPNDSSIDNFNNVSNTIIELVTCKLVESLNCIHKDNKIVHGNIKGENILLVNDESEYGFSVKFINFSLNIGYEDSIHLDMFNLGCVLIQMLGCDCTKDENIDFLFSKIPNHLVEKFKKVISQLLSKNINNQILTDIISNKITTSLPKYSTLIGEPNDGLIYIGIQNNSDGLILPLFNQPICKKTFTYGVYYLSLSSFHRQLNVGVIPESIHTLELASFNQTILPGVIPTSVRTLKLPSYNKTLTQGSIPKGVRTLLLSSFNQPLTTDIIPKTVTILKLQSFNQPIEWGALPCSLVELSLASYKQPLQWGVIPYYISTLELPLASAPFSEGSIPSGVSKLIQQGEIQQINKPIKINNENNQNYMSCSQNEFDSKLTLILNSKITRESLFFGLKYLELSTFNQSFETLPIPETVEYLKLPMYNQPLTPKLLPSGIKFLILPSFNHPIRGESIPPSVIHLVFNKLFSVIESIPSSVKYLDLGDEYYVYPGHLLHSVLSFRSGLKFRVTDPIPYSQSLTNLNLYNFNIELLKNGISSNVTSLTLGSNFTNIESLSNLPSSVTNLSFGITTLNEKAISDITKYVKSTVTTITVNNEQIRKKIN.

The Protein kinase domain maps to 33-276 (WEIITQLESN…TTSLPKYSTL (244 aa)). FNIP repeat units follow at residues 301–342 (FNQP…ELAS), 343–384 (FNQT…LLSS), 385–426 (FNQP…SLAS), 524–565 (FNQS…ILPS), 566–606 (FNHP…LGDE), and 647–690 (FNIE…FGIT).

The protein belongs to the protein kinase superfamily. STE Ser/Thr protein kinase family.

The sequence is that of Probable inactive serine/threonine-protein kinase fnkD (fnkD-1) from Dictyostelium discoideum (Social amoeba).